The primary structure comprises 114 residues: T cell receptor beta variable 25-1 (114 aa).

An N-terminal signal peptide occupies residues 1–21 (MTIRLLCYVGFYFLGAGLMEA). An Ig-like domain is found at 22-114 (DIYQTPRYLV…TSQYLCASSE (93 aa)). The cysteines at positions 42 and 110 are disulfide-linked. Asn-72 carries an N-linked (GlcNAc...) asparagine glycan.

As to quaternary structure, alpha-beta TR is a heterodimer composed of an alpha and beta chain; disulfide-linked. The alpha-beta TR is associated with the transmembrane signaling CD3 coreceptor proteins to form the TR-CD3 (TcR or TCR). The assembly of alpha-beta TR heterodimers with CD3 occurs in the endoplasmic reticulum where a single alpha-beta TR heterodimer associates with one CD3D-CD3E heterodimer, one CD3G-CD3E heterodimer and one CD247 homodimer forming a stable octameric structure. CD3D-CD3E and CD3G-CD3E heterodimers preferentially associate with TR alpha and TR beta chains, respectively. The association of the CD247 homodimer is the last step of TcR assembly in the endoplasmic reticulum and is required for transport to the cell surface.

The protein resides in the cell membrane. In terms of biological role, v region of the variable domain of T cell receptor (TR) beta chain that participates in the antigen recognition. Alpha-beta T cell receptors are antigen specific receptors which are essential to the immune response and are present on the cell surface of T lymphocytes. Recognize peptide-major histocompatibility (MH) (pMH) complexes that are displayed by antigen presenting cells (APC), a prerequisite for efficient T cell adaptive immunity against pathogens. Binding of alpha-beta TR to pMH complex initiates TR-CD3 clustering on the cell surface and intracellular activation of LCK that phosphorylates the ITAM motifs of CD3G, CD3D, CD3E and CD247 enabling the recruitment of ZAP70. In turn ZAP70 phosphorylates LAT, which recruits numerous signaling molecules to form the LAT signalosome. The LAT signalosome propagates signal branching to three major signaling pathways, the calcium, the mitogen-activated protein kinase (MAPK) kinase and the nuclear factor NF-kappa-B (NF-kB) pathways, leading to the mobilization of transcription factors that are critical for gene expression and essential for T cell growth and differentiation. The T cell repertoire is generated in the thymus, by V-(D)-J rearrangement. This repertoire is then shaped by intrathymic selection events to generate a peripheral T cell pool of self-MH restricted, non-autoaggressive T cells. Post-thymic interaction of alpha-beta TR with the pMH complexes shapes TR structural and functional avidity. The chain is T cell receptor beta variable 25-1 from Homo sapiens (Human).